A 702-amino-acid chain; its full sequence is Lipase maturation factor 2 (702 aa).

Helical transmembrane passes span 10 to 30 (LFLQ…YTQI), 75 to 95 (AQGL…ALLL), 164 to 184 (DLPF…SGVV), 226 to 246 (LSVV…FAPI), 259 to 279 (LLQV…LTLV), 316 to 336 (LLLE…YFGL), 363 to 383 (VTLP…LVVL), and 398 to 418 (AGIQ…ISLV). A glycan (N-linked (GlcNAc...) asparagine) is linked at asparagine 488. A helical membrane pass occupies residues 636–656 (ILLWGLFGAVVAIRVVQTLLA). Positions 660–702 (LQSSKQTREEKRKQTSKKDSRAASEQAAANSNSRDSWAPRRKK) are disordered. A compositionally biased stretch (basic and acidic residues) spans 665-681 (QTREEKRKQTSKKDSRA). Positions 682–693 (ASEQAAANSNSR) are enriched in low complexity.

Belongs to the lipase maturation factor family.

Its subcellular location is the endoplasmic reticulum membrane. Its function is as follows. Involved in the maturation of specific proteins in the endoplasmic reticulum. May be required for maturation and transport of active lipoprotein lipase (LPL) through the secretory pathway. This Mus musculus (Mouse) protein is Lipase maturation factor 2 (Lmf2).